The sequence spans 753 residues: Elongin-A2 (753 aa).

Positions 5 to 80 constitute a TFIIS N-terminal domain; sequence STTLHAVEKL…ARWKKLVLVD (76 aa). Disordered stretches follow at residues 80–245, 261–453, and 477–497; these read DRNT…DWHS, ETPR…GPKT, and LSDS…SPKF. 2 stretches are compositionally biased toward basic and acidic residues: residues 147–157 and 271–285; these read HSREPRAERKC and ARDR…DKEG. A compositionally biased stretch (basic residues) spans 306 to 317; it reads KRPQHSHSNKKR. Residues 333-348 show a composition bias toward basic and acidic residues; that stretch reads SPEEKEQLSNDRETQE. Positions 366–377 are enriched in acidic residues; it reads EVEEVDMAEEFE. Residues 409-428 show a composition bias toward basic and acidic residues; that stretch reads DKQRKANESKGTRESWDSAK. The activation domain stretch occupies residues 500-659; that stretch reads EAAFPGRRVN…TPYDTSRRQE (160 aa). Residues 528 to 537 are BC-box; sequence TLRQQCAQVL. The interacting with Elongin BC complex stretch occupies residues 528 to 537; it reads TLRQQCAQVL. The disordered stretch occupies residues 650 to 735; sequence TPYDTSRRQE…KTRKQAAKKV (86 aa). Positions 654–663 are enriched in basic and acidic residues; the sequence is TSRRQEKSAG. Residues 680–700 show a composition bias toward low complexity; the sequence is GSSHTPSSQSSSGGGRDSSSS.

Heterotrimer of an A (ELOA, ELOA2 or ELOA3P), ELOB and ELOC subunit. In terms of tissue distribution, specifically expressed in testis.

The protein localises to the nucleus. Functionally, SIII, also known as elongin, is a general transcription elongation factor that increases the RNA polymerase II transcription elongation past template-encoded arresting sites. Subunit A2 is transcriptionally active but its transcription activity is not enhanced by binding to the dimeric complex of the SIII regulatory subunits B and C (elongin BC complex). The protein is Elongin-A2 of Homo sapiens (Human).